The chain runs to 478 residues: Cytochrome P450 monooxygenase asqL (478 aa).

Heme is bound at residue cysteine 407.

Belongs to the cytochrome P450 family. The cofactor is heme.

It participates in secondary metabolite biosynthesis. The protein operates within alkaloid biosynthesis. Its pathway is mycotoxin biosynthesis. Functionally, cytochrome P450 monooxygenase; part of the gene cluster that mediates the biosynthesis of the aspoquinolone mycotoxins. The role of asqL within the aspoquinolone pathway has still to be determined. The first step of the pathway is catalyzed by the nonribosomal peptide synthetase asqK that condenses anthranilic acid and O-methyl-L-tyrosine to produce 4'-methoxycyclopeptin. 4'-methoxycyclopeptin is then converted to 4'-methoxydehydrocyclopeptin by the ketoglutarate-dependent dioxygenase asqJ. AsqJ also converts its first product 4'-methoxydehydrocyclopeptin to 4'-methoxycyclopenin. The following conversion of 4'-methoxycyclopenin into 4'-methoxyviridicatin is catalyzed by the cyclopenase asqI. 4'-methoxyviridicatin is the precursor of quinolone natural products, and is further converted to quinolinone B. The prenyltransferase asqH1 then catalyzes the canonical Friedel-Crafts alkylation of quinolinone B with dimethylallyl cation to yield dimethylallyl quinolone, which is subjected to FAD-dependent dehydrogenation by the FAD-linked oxidoreductase asqF to yield conjugated aryl diene. The delta(3') double bond then serves as the site of the second alkylation with DMAPP catalyzed by the prenyltransferase asqH2 to yield a carbenium ion intermediate, which can be attacked by H(2)O to yield a styrenyl quinolone containing a C3'-hydroxyprenyl chain. The FAD-dependent monooxygenase asqG performs epoxidation of the terminal C7'-C8' olefin. Finally, after dehydratation of the epoxide at C3 by asqC, the quinolone epoxide rearrangement protein asqO catalyzes an enzymatic 3-exo-tet cyclization to yield the cyclopropyl-THF ring system in aspoquinolone. The polypeptide is Cytochrome P450 monooxygenase asqL (Emericella nidulans (strain FGSC A4 / ATCC 38163 / CBS 112.46 / NRRL 194 / M139) (Aspergillus nidulans)).